The primary structure comprises 106 residues: ATP-dependent Clp protease adapter protein ClpS (106 aa).

This sequence belongs to the ClpS family. In terms of assembly, binds to the N-terminal domain of the chaperone ClpA.

Involved in the modulation of the specificity of the ClpAP-mediated ATP-dependent protein degradation. In Vibrio atlanticus (strain LGP32) (Vibrio splendidus (strain Mel32)), this protein is ATP-dependent Clp protease adapter protein ClpS.